The sequence spans 107 residues: Large ribosomal subunit protein uL24 (107 aa).

Belongs to the universal ribosomal protein uL24 family. Part of the 50S ribosomal subunit.

Its function is as follows. One of two assembly initiator proteins, it binds directly to the 5'-end of the 23S rRNA, where it nucleates assembly of the 50S subunit. One of the proteins that surrounds the polypeptide exit tunnel on the outside of the subunit. The protein is Large ribosomal subunit protein uL24 of Streptomyces coelicolor (strain ATCC BAA-471 / A3(2) / M145).